Consider the following 367-residue polypeptide: Phosphoribosylaminoimidazole-succinocarboxamide synthase (367 aa).

It belongs to the SAICAR synthetase family.

It carries out the reaction 5-amino-1-(5-phospho-D-ribosyl)imidazole-4-carboxylate + L-aspartate + ATP = (2S)-2-[5-amino-1-(5-phospho-beta-D-ribosyl)imidazole-4-carboxamido]succinate + ADP + phosphate + 2 H(+). The protein operates within purine metabolism; IMP biosynthesis via de novo pathway; 5-amino-1-(5-phospho-D-ribosyl)imidazole-4-carboxamide from 5-amino-1-(5-phospho-D-ribosyl)imidazole-4-carboxylate: step 1/2. The chain is Phosphoribosylaminoimidazole-succinocarboxamide synthase from Vibrio vulnificus (strain CMCP6).